Reading from the N-terminus, the 55-residue chain is MMSTLISIVCIAVFFCLNILGMMHMLPLYITSPLLFLSILFTLYRLNHRKTFKGF.

The next 2 helical transmembrane spans lie at 5 to 25 (LISIVCIAVFFCLNILGMMHM) and 26 to 46 (LPLYITSPLLFLSILFTLYRL).

Its subcellular location is the cell membrane. This is an uncharacterized protein from Bacillus subtilis (strain 168).